The following is a 412-amino-acid chain: [Pyruvate dehydrogenase (acetyl-transferring)] kinase isozyme 4, mitochondrial (412 aa).

Positions 138-368 (ILEYKDTCTV…DAIIYLKALS (231 aa)) constitute a Histidine kinase domain. Residues 254–261 (ELFKNAMR), D293, 312–313 (ST), and 329–334 (GFGYGL) each bind ATP.

It belongs to the PDK/BCKDK protein kinase family. As to quaternary structure, homodimer. Interacts with the pyruvate dehydrogenase complex subunit DLAT, and is part of the multimeric pyruvate dehydrogenase complex that contains multiple copies of pyruvate dehydrogenase (E1), dihydrolipoamide acetyltransferase (DLAT, E2) and lipoamide dehydrogenase (DLD, E3).

It is found in the mitochondrion matrix. It carries out the reaction L-seryl-[pyruvate dehydrogenase E1 alpha subunit] + ATP = O-phospho-L-seryl-[pyruvate dehydrogenase E1 alpha subunit] + ADP + H(+). Kinase that plays a key role in regulation of glucose and fatty acid metabolism and homeostasis via phosphorylation of the pyruvate dehydrogenase subunits PDHA1 and PDHA2. This inhibits pyruvate dehydrogenase activity, and thereby regulates metabolite flux through the tricarboxylic acid cycle, down-regulates aerobic respiration and inhibits the formation of acetyl-coenzyme A from pyruvate. Inhibition of pyruvate dehydrogenase decreases glucose utilization and increases fat metabolism in response to prolonged fasting and starvation. Plays an important role in maintaining normal blood glucose levels under starvation, and is involved in the insulin signaling cascade. Via its regulation of pyruvate dehydrogenase activity, plays an important role in maintaining normal blood pH and in preventing the accumulation of ketone bodies under starvation. In the fed state, mediates cellular responses to glucose levels and to a high-fat diet. Regulates both fatty acid oxidation and de novo fatty acid biosynthesis. Plays a role in the generation of reactive oxygen species. Protects detached epithelial cells against anoikis. Plays a role in cell proliferation via its role in regulating carbohydrate and fatty acid metabolism. The sequence is that of [Pyruvate dehydrogenase (acetyl-transferring)] kinase isozyme 4, mitochondrial (Pdk4) from Mus musculus (Mouse).